We begin with the raw amino-acid sequence, 57 residues long: UPF0391 membrane protein RPB_2024 (57 aa).

A run of 2 helical transmembrane segments spans residues 4 to 24 (WVVT…GGIA) and 30 to 50 (IAKV…VVGL).

It belongs to the UPF0391 family.

The protein localises to the cell membrane. This is UPF0391 membrane protein RPB_2024 from Rhodopseudomonas palustris (strain HaA2).